Here is a 150-residue protein sequence, read N- to C-terminus: 6,7-dimethyl-8-ribityllumazine synthase (150 aa).

5-amino-6-(D-ribitylamino)uracil is bound by residues Phe11, 43–45 (VYD), and 67–69 (AVI). (2S)-2-hydroxy-3-oxobutyl phosphate is bound at residue 72-73 (AT). Residue His75 is the Proton donor of the active site. Leu100 serves as a coordination point for 5-amino-6-(D-ribitylamino)uracil. (2S)-2-hydroxy-3-oxobutyl phosphate is bound at residue Arg115.

The protein belongs to the DMRL synthase family.

The catalysed reaction is (2S)-2-hydroxy-3-oxobutyl phosphate + 5-amino-6-(D-ribitylamino)uracil = 6,7-dimethyl-8-(1-D-ribityl)lumazine + phosphate + 2 H2O + H(+). Its pathway is cofactor biosynthesis; riboflavin biosynthesis; riboflavin from 2-hydroxy-3-oxobutyl phosphate and 5-amino-6-(D-ribitylamino)uracil: step 1/2. Catalyzes the formation of 6,7-dimethyl-8-ribityllumazine by condensation of 5-amino-6-(D-ribitylamino)uracil with 3,4-dihydroxy-2-butanone 4-phosphate. This is the penultimate step in the biosynthesis of riboflavin. The polypeptide is 6,7-dimethyl-8-ribityllumazine synthase (Pyrobaculum arsenaticum (strain DSM 13514 / JCM 11321 / PZ6)).